A 460-amino-acid chain; its full sequence is UDP-N-acetylmuramoylalanine--D-glutamate ligase (460 aa).

ATP is bound at residue 123–129; the sequence is GTNGKTT.

Belongs to the MurCDEF family.

Its subcellular location is the cytoplasm. It carries out the reaction UDP-N-acetyl-alpha-D-muramoyl-L-alanine + D-glutamate + ATP = UDP-N-acetyl-alpha-D-muramoyl-L-alanyl-D-glutamate + ADP + phosphate + H(+). It functions in the pathway cell wall biogenesis; peptidoglycan biosynthesis. Functionally, cell wall formation. Catalyzes the addition of glutamate to the nucleotide precursor UDP-N-acetylmuramoyl-L-alanine (UMA). The sequence is that of UDP-N-acetylmuramoylalanine--D-glutamate ligase (murD) from Enterococcus hirae.